The primary structure comprises 288 residues: Proteasome assembly chaperone 1 (288 aa).

Residue alanine 2 is modified to N-acetylalanine. A disordered region spans residues 12–38 (TPCRAGTEEEEEEEDGNRETPEDREVR). Threonine 18 bears the Phosphothreonine mark. Residues 28 to 38 (NRETPEDREVR) show a composition bias toward basic and acidic residues. Threonine 54 carries the post-translational modification Phosphothreonine. Serine 180 carries the post-translational modification Phosphoserine. At lysine 264 the chain carries N6-acetyllysine.

This sequence belongs to the PSMG1 family. As to quaternary structure, forms a heterodimer with PSMG2. The PSMG1-PSMG2 heterodimer interacts directly with the PSMA5 and PSMA7 proteasome alpha subunits. Post-translationally, degraded by the proteasome upon completion of 20S proteasome maturation.

It is found in the cytoplasm. The protein localises to the endoplasmic reticulum. Its function is as follows. Chaperone protein which promotes assembly of the 20S proteasome as part of a heterodimer with PSMG2. The PSMG1-PSMG2 heterodimer binds to the PSMA5 and PSMA7 proteasome subunits, promotes assembly of the proteasome alpha subunits into the heteroheptameric alpha ring and prevents alpha ring dimerization. This chain is Proteasome assembly chaperone 1, found in Bos taurus (Bovine).